The sequence spans 212 residues: Orotate phosphoribosyltransferase (212 aa).

5-phospho-alpha-D-ribose 1-diphosphate is bound at residue K26. 34–35 is a binding site for orotate; that stretch reads FF. Residues 72–73, R98, K99, K102, H104, and 123–131 contribute to the 5-phospho-alpha-D-ribose 1-diphosphate site; these read YK and DDVITAGTA. T127 and R155 together coordinate orotate.

Belongs to the purine/pyrimidine phosphoribosyltransferase family. PyrE subfamily. In terms of assembly, homodimer. It depends on Mg(2+) as a cofactor.

The catalysed reaction is orotidine 5'-phosphate + diphosphate = orotate + 5-phospho-alpha-D-ribose 1-diphosphate. Its pathway is pyrimidine metabolism; UMP biosynthesis via de novo pathway; UMP from orotate: step 1/2. Catalyzes the transfer of a ribosyl phosphate group from 5-phosphoribose 1-diphosphate to orotate, leading to the formation of orotidine monophosphate (OMP). This Marinobacter nauticus (strain ATCC 700491 / DSM 11845 / VT8) (Marinobacter aquaeolei) protein is Orotate phosphoribosyltransferase.